The sequence spans 706 residues: Protein-glutamine gamma-glutamyltransferase 6 (706 aa).

Residues alanine 223, asparagine 226, and asparagine 228 each coordinate Ca(2+). Cysteine 274 is an active-site residue. Ca(2+) is bound by residues aspartate 303, aspartate 305, asparagine 307, serine 309, and aspartate 327. Residues histidine 333 and aspartate 356 contribute to the active site. Positions 396, 417, 445, and 450 each coordinate Ca(2+).

This sequence belongs to the transglutaminase superfamily. Transglutaminase family. It depends on Ca(2+) as a cofactor.

It is found in the cytoplasm. The enzyme catalyses L-glutaminyl-[protein] + L-lysyl-[protein] = [protein]-L-lysyl-N(6)-5-L-glutamyl-[protein] + NH4(+). In terms of biological role, catalyzes the cross-linking of proteins and the conjugation of polyamines to proteins. The sequence is that of Protein-glutamine gamma-glutamyltransferase 6 (TGM6) from Homo sapiens (Human).